A 443-amino-acid chain; its full sequence is sn-2 acyl-lipid omega-3 desaturase (ferredoxin), chloroplastic (443 aa).

Residues 1–51 (MAGLVLSGCAIKPFSQSLPIPTKRFITNPSNINLLHPKDPIFSPNFHGFSR) constitute a chloroplast transit peptide. Helical transmembrane passes span 120–140 (MSYV…AAHL) and 143–163 (WLVW…LFVL). Positions 165–169 (HDCGH) match the Histidine box-1 motif. The short motif at 201–205 (HRTHH) is the Histidine box-2 element. The next 2 membrane-spanning stretches (helical) occupy residues 281 to 301 (TICW…VGPV) and 304 to 324 (LKLY…VTYL). The short motif at 368–372 (HVIHH) is the Histidine box-3 element.

It belongs to the fatty acid desaturase type 1 family. As to expression, highly expressed in leaves and cotyledons, while no or little expression detected in mature seeds, roots and stems.

It localises to the plastid. The protein localises to the chloroplast membrane. The catalysed reaction is a (7Z,10Z)-hexadecadienoyl-containing glycerolipid + 2 reduced [2Fe-2S]-[ferredoxin] + O2 + 2 H(+) = a (7Z,10Z,13Z)-hexadecatrienoyl-containing glycerolipid + 2 oxidized [2Fe-2S]-[ferredoxin] + 2 H2O. It carries out the reaction a (9Z,12Z)-octadecadienoyl-containing glycerolipid + 2 reduced [2Fe-2S]-[ferredoxin] + O2 + 2 H(+) = (9Z,12Z,15Z)-octadecatrienoyl-containing glycerolipid + 2 oxidized [2Fe-2S]-[ferredoxin] + 2 H2O. It functions in the pathway lipid metabolism; polyunsaturated fatty acid biosynthesis. Its function is as follows. Chloroplast omega-3 fatty acid desaturase introduces the third double bond in the biosynthesis of 18:3, and probably also 16:3 fatty acids, important constituents of plant membranes. It is thought to use ferredoxin as an electron donor and to act on fatty acids esterified to galactolipids, sulfolipids and phosphatidylglycerol. In Helianthus annuus (Common sunflower), this protein is sn-2 acyl-lipid omega-3 desaturase (ferredoxin), chloroplastic.